A 279-amino-acid chain; its full sequence is tRNA-cytidine(32) 2-sulfurtransferase (279 aa).

Positions 46–51 (SGGKDS) match the PP-loop motif motif. [4Fe-4S] cluster contacts are provided by cysteine 121, cysteine 124, and cysteine 212.

The protein belongs to the TtcA family. In terms of assembly, homodimer. Requires Mg(2+) as cofactor. [4Fe-4S] cluster is required as a cofactor.

It localises to the cytoplasm. The enzyme catalyses cytidine(32) in tRNA + S-sulfanyl-L-cysteinyl-[cysteine desulfurase] + AH2 + ATP = 2-thiocytidine(32) in tRNA + L-cysteinyl-[cysteine desulfurase] + A + AMP + diphosphate + H(+). It functions in the pathway tRNA modification. Functionally, catalyzes the ATP-dependent 2-thiolation of cytidine in position 32 of tRNA, to form 2-thiocytidine (s(2)C32). The sulfur atoms are provided by the cysteine/cysteine desulfurase (IscS) system. This is tRNA-cytidine(32) 2-sulfurtransferase from Marinomonas sp. (strain MWYL1).